The following is an 85-amino-acid chain: Small ribosomal subunit protein uS17 (85 aa).

The protein belongs to the universal ribosomal protein uS17 family. In terms of assembly, part of the 30S ribosomal subunit.

In terms of biological role, one of the primary rRNA binding proteins, it binds specifically to the 5'-end of 16S ribosomal RNA. This is Small ribosomal subunit protein uS17 from Aggregatibacter actinomycetemcomitans (Actinobacillus actinomycetemcomitans).